The primary structure comprises 865 residues: Fatty acyl-CoA synthetase and RNA processing-associated kinase 1 (865 aa).

One can recognise a Protein kinase domain in the interval 41–313 (YILGSTLGEG…LKQIKKHEWL (273 aa)). ATP contacts are provided by residues 47 to 55 (LGEGEFGKV) and lysine 80. Aspartate 175 acts as the Proton acceptor in catalysis. Residues 341–398 (KPRRRYGSRPQSSCSTSSLGSRSDKRDSLVIDSTLITFPAPPQESQNHIITRPASIAS) are disordered. Over residues 352–361 (SSCSTSSLGS) the composition is skewed to low complexity. Phosphoserine is present on serine 441. Disordered regions lie at residues 480 to 554 (ISGS…YTTP), 673 to 733 (TEES…LNEA), and 754 to 782 (SLYS…YQTN). Over residues 494–538 (STTMQTSKIQPNNMASSQNHQYNKNKTQNSLQSAKNFYRTSSSSH) the composition is skewed to polar residues. Basic and acidic residues-rich tracts occupy residues 690-708 (EGQE…EKGS) and 724-733 (NHLERSLNEA).

This sequence belongs to the protein kinase superfamily. Ser/Thr protein kinase family. As to quaternary structure, interacts with FAA3, POL5 and TPA1.

It localises to the cytoplasm. The catalysed reaction is L-seryl-[protein] + ATP = O-phospho-L-seryl-[protein] + ADP + H(+). It catalyses the reaction L-threonyl-[protein] + ATP = O-phospho-L-threonyl-[protein] + ADP + H(+). Putative serine/threonine-protein kinase that may be involved in rRNA transcription and ribosome biogenesis. The chain is Fatty acyl-CoA synthetase and RNA processing-associated kinase 1 (FRK1) from Saccharomyces cerevisiae (strain ATCC 204508 / S288c) (Baker's yeast).